Consider the following 216-residue polypeptide: MRTVLLTGFEPFENEPINPSWEAVRALDGERVGDAVIVARQLPCVFGAAIDTIGELVDVLRPALVIAVGQAGGRAEMSVERVAINVDDARIADNAGAQPIDTAIVAGGPAAYFATLPIKAMVRDMRAAGVPASVSQTAGTFVCNHVFYGLMHRLSQQPDGDVRGGFIHIPYLPEQAARHPGQPSLAQETLVKGLRAAVATALSTRADVREQGGQLH.

Catalysis depends on residues glutamate 80, cysteine 143, and histidine 168.

The protein belongs to the peptidase C15 family. As to quaternary structure, homotetramer.

It is found in the cytoplasm. It catalyses the reaction Release of an N-terminal pyroglutamyl group from a polypeptide, the second amino acid generally not being Pro.. In terms of biological role, removes 5-oxoproline from various penultimate amino acid residues except L-proline. The chain is Pyrrolidone-carboxylate peptidase from Cupriavidus necator (strain ATCC 17699 / DSM 428 / KCTC 22496 / NCIMB 10442 / H16 / Stanier 337) (Ralstonia eutropha).